The chain runs to 349 residues: GDSL esterase/lipase At2g19050 (349 aa).

The signal sequence occupies residues 1–23; that stretch reads MAEAIFKALLLVIATTAFATTEA. Serine 38 functions as the Nucleophile in the catalytic mechanism. N-linked (GlcNAc...) asparagine glycosylation is present at asparagine 49. Residues aspartate 316 and histidine 319 contribute to the active site.

The protein belongs to the 'GDSL' lipolytic enzyme family.

The protein resides in the secreted. The polypeptide is GDSL esterase/lipase At2g19050 (Arabidopsis thaliana (Mouse-ear cress)).